A 279-amino-acid polypeptide reads, in one-letter code: Expansin-A22 (279 aa).

The first 27 residues, 1-27, serve as a signal peptide directing secretion; that stretch reads MKLLEKMIYVEFLMIIMVIWVVPMSYG. In terms of domain architecture, Expansin-like EG45 spans 76 to 186; the sequence is QGACGYGNLF…RRIPCSKTGG (111 aa). In terms of domain architecture, Expansin-like CBD spans 196–275; that stretch reads YFLMVLIYNV…NWGFGQTFDG (80 aa).

Belongs to the expansin family. Expansin A subfamily.

The protein localises to the secreted. Its subcellular location is the cell wall. The protein resides in the membrane. Causes loosening and extension of plant cell walls by disrupting non-covalent bonding between cellulose microfibrils and matrix glucans. No enzymatic activity has been found. This chain is Expansin-A22 (EXPA22), found in Arabidopsis thaliana (Mouse-ear cress).